The primary structure comprises 259 residues: Snake venom serine protease homolog rhinocerase 2 (259 aa).

The signal sequence occupies residues V1–A17. A propeptide spanning residues Q18–L23 is cleaved from the precursor. Residues V24–A250 enclose the Peptidase S1 domain. Intrachain disulfides connect C30–C164, C51–C67, C99–C257, C143–C211, C175–C190, and C201–C226. The N-linked (GlcNAc...) asparagine glycan is linked to N252.

It belongs to the peptidase S1 family. Snake venom subfamily. As to expression, expressed by the venom gland.

The protein resides in the secreted. Its function is as follows. Snake venom serine protease homolog that may act in the hemostasis system of the prey. This Bitis rhinoceros (West African gaboon viper) protein is Snake venom serine protease homolog rhinocerase 2.